A 147-amino-acid chain; its full sequence is Small ribosomal subunit protein uS5 (147 aa).

The 64-residue stretch at 9 to 72 (FQEVVVNIGR…DDAFKNLIHV (64 aa)) folds into the S5 DRBM domain.

The protein belongs to the universal ribosomal protein uS5 family. As to quaternary structure, part of the 30S ribosomal subunit. Contacts proteins S4 and S8.

With S4 and S12 plays an important role in translational accuracy. Functionally, located at the back of the 30S subunit body where it stabilizes the conformation of the head with respect to the body. In Helicobacter pylori (strain J99 / ATCC 700824) (Campylobacter pylori J99), this protein is Small ribosomal subunit protein uS5.